Reading from the N-terminus, the 349-residue chain is UDP-3-O-acylglucosamine N-acyltransferase (349 aa).

The Proton acceptor role is filled by His240.

This sequence belongs to the transferase hexapeptide repeat family. LpxD subfamily. As to quaternary structure, homotrimer.

It catalyses the reaction a UDP-3-O-[(3R)-3-hydroxyacyl]-alpha-D-glucosamine + a (3R)-hydroxyacyl-[ACP] = a UDP-2-N,3-O-bis[(3R)-3-hydroxyacyl]-alpha-D-glucosamine + holo-[ACP] + H(+). Its pathway is bacterial outer membrane biogenesis; LPS lipid A biosynthesis. In terms of biological role, catalyzes the N-acylation of UDP-3-O-acylglucosamine using 3-hydroxyacyl-ACP as the acyl donor. Is involved in the biosynthesis of lipid A, a phosphorylated glycolipid that anchors the lipopolysaccharide to the outer membrane of the cell. This is UDP-3-O-acylglucosamine N-acyltransferase from Porphyromonas gingivalis (strain ATCC 33277 / DSM 20709 / CIP 103683 / JCM 12257 / NCTC 11834 / 2561).